The following is a 156-amino-acid chain: Ribosomal RNA large subunit methyltransferase H (156 aa).

S-adenosyl-L-methionine-binding positions include L73, G104, and 123 to 128 (LSPLTL).

The protein belongs to the RNA methyltransferase RlmH family. In terms of assembly, homodimer.

Its subcellular location is the cytoplasm. It carries out the reaction pseudouridine(1915) in 23S rRNA + S-adenosyl-L-methionine = N(3)-methylpseudouridine(1915) in 23S rRNA + S-adenosyl-L-homocysteine + H(+). Its function is as follows. Specifically methylates the pseudouridine at position 1915 (m3Psi1915) in 23S rRNA. The sequence is that of Ribosomal RNA large subunit methyltransferase H from Pectobacterium carotovorum subsp. carotovorum (strain PC1).